The primary structure comprises 291 residues: Lipoyl synthase, organellar chromatophore (291 aa).

Positions 33, 38, 44, 59, 63, 66, and 274 each coordinate [4Fe-4S] cluster. The 219-residue stretch at 45 to 263 (FAGGTATFLI…AIGELEMNFL (219 aa)) folds into the Radical SAM core domain.

It belongs to the radical SAM superfamily. Lipoyl synthase family. The cofactor is [4Fe-4S] cluster.

Its subcellular location is the plastid. The protein resides in the organellar chromatophore. It catalyses the reaction [[Fe-S] cluster scaffold protein carrying a second [4Fe-4S](2+) cluster] + N(6)-octanoyl-L-lysyl-[protein] + 2 oxidized [2Fe-2S]-[ferredoxin] + 2 S-adenosyl-L-methionine + 4 H(+) = [[Fe-S] cluster scaffold protein] + N(6)-[(R)-dihydrolipoyl]-L-lysyl-[protein] + 4 Fe(3+) + 2 hydrogen sulfide + 2 5'-deoxyadenosine + 2 L-methionine + 2 reduced [2Fe-2S]-[ferredoxin]. Its pathway is protein modification; protein lipoylation via endogenous pathway; protein N(6)-(lipoyl)lysine from octanoyl-[acyl-carrier-protein]: step 2/2. Its function is as follows. Catalyzes the radical-mediated insertion of two sulfur atoms into the C-6 and C-8 positions of the octanoyl moiety bound to the lipoyl domains of lipoate-dependent enzymes, thereby converting the octanoylated domains into lipoylated derivatives. This Paulinella chromatophora protein is Lipoyl synthase, organellar chromatophore.